Consider the following 244-residue polypeptide: MFRCLMQNHQRRALVLFSGGQDSTTCLAWALERYAHVETLGFDYGQRHRVELDARQVVLRELRANFPDWAQRLGDDHLLDLGILAQVGDTAMTSDREIEMQANGLPNTFVPGRNLLFLTLAAALGYRRQLDVLVGGMCETDFSGYPDCRDDTIKSQQVTLGLGLGTRVTIETPLMWLDKAQTWELADRLGGQALVDMVIEHSHTCYLGERGQRHDWGYGCGHCPACALRKNGWERWVAGAAHAD.

17–27 contributes to the ATP binding site; that stretch reads FSGGQDSTTCL. The Zn(2+) site is built by Cys205, Cys220, Cys223, and Cys226.

It belongs to the QueC family. Zn(2+) serves as cofactor.

The enzyme catalyses 7-carboxy-7-deazaguanine + NH4(+) + ATP = 7-cyano-7-deazaguanine + ADP + phosphate + H2O + H(+). Its pathway is purine metabolism; 7-cyano-7-deazaguanine biosynthesis. In terms of biological role, catalyzes the ATP-dependent conversion of 7-carboxy-7-deazaguanine (CDG) to 7-cyano-7-deazaguanine (preQ(0)). This Bordetella pertussis (strain Tohama I / ATCC BAA-589 / NCTC 13251) protein is 7-cyano-7-deazaguanine synthase.